The primary structure comprises 154 residues: Large-conductance mechanosensitive channel (154 aa).

Helical transmembrane passes span 14–34 and 86–106; these read VVDLAVGIVIGAAFGAIVNSL and VFINALINFLILAMAIFFFVV.

This sequence belongs to the MscL family. As to quaternary structure, homopentamer.

The protein localises to the cell membrane. Functionally, channel that opens in response to stretch forces in the membrane lipid bilayer. May participate in the regulation of osmotic pressure changes within the cell. The polypeptide is Large-conductance mechanosensitive channel (Dehalococcoides mccartyi (strain ATCC BAA-2100 / JCM 16839 / KCTC 5957 / BAV1)).